Consider the following 576-residue polypeptide: MNLINTVKNCIVEKLHILSDKKLIVLDDVILSKLIVDYPNNHNHGDLYTNAALILSSHIKKSPLEIAEILLSEFSNIKEISSINVVKPGFINFSISLYVWYEVVASINMLKEGFANVNIGNGQKVNVEFVSANPTGPMHIGHARGAIFGDVLANLLEKVGYQVVREYYINDAGTQIDVLVESVYLRYKEATGQDIVIGSGLYPGLYLREIGKLLYEKYGTDLLEMSFVRKMKIIRDVSLEYLMNLIKEDLALLGIEHDVFTSEAELLKNNIVEKCVKLLEDKQLIYYGVLEQPKGTEMQNWKPRTQMLFKSTDFGDDVDRALQKVDGSWTYFANDIAYHFDKISRGFQHMILELGSDHIGYVKRLKAAVKALSNNNATVDIKLHNTVNFLDDGVQVKMSKRSGEFLTIRDVIEKVGKDVVRFMMLTRKSDVVLDFDFAKVVEQSKNNPIFYVQYAHARVCSLMRNAPNILGIEDTDFSVLSSKEEILLIKLLAKWPNVVEMSAKTAEPHRITFYLIEVAEAFHVLWGYGNKNANRRFIIDNDVNLTSARIYLAKSVAYIISSGLKIFSIVPLEEMH.

The short motif at 132 to 142 is the 'HIGH' region element; sequence ANPTGPMHIGH.

Belongs to the class-I aminoacyl-tRNA synthetase family. As to quaternary structure, monomer.

It is found in the cytoplasm. The catalysed reaction is tRNA(Arg) + L-arginine + ATP = L-arginyl-tRNA(Arg) + AMP + diphosphate. This Ehrlichia chaffeensis (strain ATCC CRL-10679 / Arkansas) protein is Arginine--tRNA ligase.